Consider the following 419-residue polypeptide: uncharacterized protein (419 aa).

Cys-38, Cys-44, Cys-47, and Cys-126 together coordinate [4Fe-4S] cluster. S-adenosyl-L-methionine contacts are provided by Gln-250, Tyr-280, Glu-301, and Asp-346. Catalysis depends on Cys-373, which acts as the Nucleophile.

Belongs to the class I-like SAM-binding methyltransferase superfamily. RNA M5U methyltransferase family.

This is an uncharacterized protein from Prochlorococcus marinus (strain SARG / CCMP1375 / SS120).